The primary structure comprises 497 residues: Zinc finger protein 3 (497 aa).

The span at 1–20 (MGTEKKEGLPKEETSEDSKP) shows a compositional bias: basic and acidic residues. Residues 1 to 53 (MGTEKKEGLPKEETSEDSKPHGQTVEKLAQEVCHGHEFGEASEEDMSEGHLRE) are disordered. Residues Lys-6 and Lys-11 each participate in a glycyl lysine isopeptide (Lys-Gly) (interchain with G-Cter in SUMO2) cross-link. 13 consecutive C2H2-type zinc fingers follow at residues 136–158 (HTCKECGKAFNQNSHLIQHMRVH), 164–186 (FECKECGKTFGTNSSLRRHQRIH), 192–214 (FACTECGKAFIQSSHLIHHHRIH), 220–242 (YKCEECGKAFSQNSALILHQRIH), 248–270 (YECNECGKTFRVSSQLIQHQRIH), 276–298 (HECSECGKAFKHSSGLIRHQKIH), 304–326 (YLCNECGKGFGQSSELIRHQRIH), 332–354 (YECSECGKTFGQNSEIIRHIRIH), 360–382 (YVCKECGKAFRGNSELLRHERIH), 388–410 (YECFECGKAFRRTSHLIVHQRIH), 416–438 (HQCNECARTFWDNSELLLHQKIH), 444–466 (YECSECEKTFSQHSQLTIHQRIH), and 472–494 (YECQECQKTFSRSSHLLRHQSVH).

Belongs to the krueppel C2H2-type zinc-finger protein family.

It localises to the nucleus. In terms of biological role, may be involved in transcriptional regulation. In Mus musculus (Mouse), this protein is Zinc finger protein 3 (Zfp3).